The following is a 463-amino-acid chain: Glutamate--tRNA ligase 1 (463 aa).

The 'HIGH' region motif lies at proline 10–glycine 20. Residues lysine 238–arginine 242 carry the 'KMSKS' region motif. Lysine 241 provides a ligand contact to ATP.

This sequence belongs to the class-I aminoacyl-tRNA synthetase family. Glutamate--tRNA ligase type 1 subfamily. As to quaternary structure, monomer.

The protein localises to the cytoplasm. The enzyme catalyses tRNA(Glu) + L-glutamate + ATP = L-glutamyl-tRNA(Glu) + AMP + diphosphate. Catalyzes the attachment of glutamate to tRNA(Glu) in a two-step reaction: glutamate is first activated by ATP to form Glu-AMP and then transferred to the acceptor end of tRNA(Glu). The sequence is that of Glutamate--tRNA ligase 1 from Helicobacter pylori (strain G27).